The primary structure comprises 237 residues: Ribosomal RNA small subunit methyltransferase G (237 aa).

Residues G78, F83, 129–130 (AE), and R148 contribute to the S-adenosyl-L-methionine site.

It belongs to the methyltransferase superfamily. RNA methyltransferase RsmG family.

The protein resides in the cytoplasm. Specifically methylates the N7 position of a guanine in 16S rRNA. The sequence is that of Ribosomal RNA small subunit methyltransferase G from Streptococcus equi subsp. equi (strain 4047).